Reading from the N-terminus, the 543-residue chain is Chaperonin GroEL (543 aa).

Residues Thr-29–Pro-32, Asp-86–Thr-90, Gly-413, Asp-477–Leu-479, and Asp-493 each bind ATP.

The protein belongs to the chaperonin (HSP60) family. As to quaternary structure, forms a cylinder of 14 subunits composed of two heptameric rings stacked back-to-back. Interacts with the co-chaperonin GroES.

It is found in the cytoplasm. It carries out the reaction ATP + H2O + a folded polypeptide = ADP + phosphate + an unfolded polypeptide.. Its function is as follows. Together with its co-chaperonin GroES, plays an essential role in assisting protein folding. The GroEL-GroES system forms a nano-cage that allows encapsulation of the non-native substrate proteins and provides a physical environment optimized to promote and accelerate protein folding. The chain is Chaperonin GroEL from Clostridium botulinum.